The sequence spans 355 residues: Uroporphyrinogen decarboxylase (355 aa).

Residues 38-42 (RQAGR), D87, Y162, S217, and H331 each bind substrate.

This sequence belongs to the uroporphyrinogen decarboxylase family. In terms of assembly, homodimer.

The protein resides in the cytoplasm. The catalysed reaction is uroporphyrinogen III + 4 H(+) = coproporphyrinogen III + 4 CO2. Its pathway is porphyrin-containing compound metabolism; protoporphyrin-IX biosynthesis; coproporphyrinogen-III from 5-aminolevulinate: step 4/4. Catalyzes the decarboxylation of four acetate groups of uroporphyrinogen-III to yield coproporphyrinogen-III. The sequence is that of Uroporphyrinogen decarboxylase from Streptomyces avermitilis (strain ATCC 31267 / DSM 46492 / JCM 5070 / NBRC 14893 / NCIMB 12804 / NRRL 8165 / MA-4680).